The primary structure comprises 335 residues: Probable deoxyhypusine synthase (335 aa).

The active-site Nucleophile is the lysine 308.

It belongs to the deoxyhypusine synthase family. NAD(+) serves as cofactor.

The enzyme catalyses [eIF5A protein]-L-lysine + spermidine = [eIF5A protein]-deoxyhypusine + propane-1,3-diamine. It participates in protein modification; eIF5A hypusination. In terms of biological role, catalyzes the NAD-dependent oxidative cleavage of spermidine and the subsequent transfer of the butylamine moiety of spermidine to the epsilon-amino group of a specific lysine residue of the eIF-5A precursor protein to form the intermediate deoxyhypusine residue. In Thermococcus onnurineus (strain NA1), this protein is Probable deoxyhypusine synthase.